The following is an 856-amino-acid chain: Facilitated trehalose transporter Tret1 (856 aa).

Disordered regions lie at residues 1 to 29 (MSGR…LKEK) and 62 to 202 (DPFL…KATS). The Cytoplasmic segment spans residues 1 to 389 (MSGRDNRGAG…LEVYRPTTNP (389 aa)). Residues 69-80 (VSPQRHPQTVRT) show a composition bias toward polar residues. Basic and acidic residues predominate over residues 133–142 (EIREHRDRQQ). The segment covering 170–180 (GNSNTNSNKAA) has biased composition (polar residues). Phosphoserine is present on residues Ser-247, Ser-248, Ser-249, Ser-319, and Ser-321. Positions 326–345 (LTSRQHFQQQRSISTDSRKS) are disordered. Polar residues predominate over residues 329–340 (RQHFQQQRSIST). A helical membrane pass occupies residues 390 to 410 (IFIWTQVIAALSVSLGSLVVG). Over 411 to 439 (FVSAYTSPALVSMSDPNITSFTVTKDAGS) the chain is Extracellular. A glycan (N-linked (GlcNAc...) asparagine) is linked at Asn-427. The chain crosses the membrane as a helical span at residues 440–460 (WVGGIMPLAGLVGGVAGGPLI). The Cytoplasmic portion of the chain corresponds to 461–472 (EYMGRRNTILAT). A helical membrane pass occupies residues 473–493 (AVPFIVSSLLIACAVNVAMVL). The Extracellular portion of the chain corresponds to 494–496 (CGR). Residues 497–517 (FLAGFCVGIASLSLPVYLGET) form a helical membrane-spanning segment. Over 518 to 527 (VQPEVRGTLG) the chain is Cytoplasmic. Residues 528 to 548 (LLPTAFGNIGILVCFVAGSFM) form a helical membrane-spanning segment. Asn-549 is a glycosylation site (N-linked (GlcNAc...) asparagine). Over 549–551 (NWS) the chain is Extracellular. A helical membrane pass occupies residues 552-572 (MLAFLGAALPVPFLILMFLIP). The Cytoplasmic segment spans residues 573–635 (ETPRWYVSRG…ELLKRNNLKP (63 aa)). Residues 636 to 656 (LSISLGLMFFQQFSGINAVIF) traverse the membrane as a helical segment. Over 657–672 (YTVQIFKDAGSTIDGN) the chain is Extracellular. Residues 673–693 (VCTIIVGVVNFVATFIGILLI) form a helical membrane-spanning segment. The Cytoplasmic segment spans residues 694 to 699 (DRAGRK). The helical transmembrane segment at 700 to 720 (ILLYASDIAMVLTLFVLGGFF) threads the bilayer. Residues 721-739 (YCKAHGPDVSHLGWLPLTC) lie on the Extracellular side of the membrane. Residues 740 to 760 (FVVYILGFSVGFGPIPWLMMG) traverse the membrane as a helical segment. Residues 761–766 (EILPAK) lie on the Cytoplasmic side of the membrane. Residues 767 to 787 (IRGAAASVATSFNWTCTFVVT) traverse the membrane as a helical segment. Topologically, residues 788-800 (KTFQDLVGSLGAH) are extracellular. Residues 801 to 821 (GAFWLFGAICFVGLFFVILYV) form a helical membrane-spanning segment. At 822–856 (PETQGKTLEDIERKMMGRVRRMSSVANIKPLSFNM) the chain is on the cytoplasmic side. Residues Ser-844 and Ser-845 each carry the phosphoserine modification.

The protein belongs to the major facilitator superfamily. Sugar transporter (TC 2.A.1.1) family. Trehalose transporter subfamily.

Its subcellular location is the cell membrane. Low-capacity facilitative transporter for trehalose. Does not transport maltose, sucrose or lactose. Mediates the bidirectional transfer of trehalose. Responsible for the transport of trehalose synthesized in the fat body and the incorporation of trehalose into other tissues that require a carbon source, thereby regulating trehalose levels in the hemolymph. The protein is Facilitated trehalose transporter Tret1 of Drosophila yakuba (Fruit fly).